Reading from the N-terminus, the 139-residue chain is Gastrula zinc finger protein XlCGF67.1 (139 aa).

5 consecutive C2H2-type zinc fingers follow at residues 6–28, 33–55, 61–83, 89–111, and 117–139; these read VSCPECGKCFTSRTYLNVHKKVH, YSCSECGKSFLSRSHLNTHLRTH, YSCSECGKCFTSSAILITHKRIH, FSCQECGKSFSYRSVFMEHQKIH, and FSCSDCGKCFRYRSHLKVHSRIH.

Belongs to the krueppel C2H2-type zinc-finger protein family.

The protein resides in the nucleus. Functionally, may be involved in transcriptional regulation. The polypeptide is Gastrula zinc finger protein XlCGF67.1 (Xenopus laevis (African clawed frog)).